Reading from the N-terminus, the 547-residue chain is Undecaprenyl phosphate-alpha-4-amino-4-deoxy-L-arabinose arabinosyl transferase (547 aa).

The next 10 membrane-spanning stretches (helical) occupy residues 83–103 (FASA…ALQL), 111–131 (FLAS…TYSV), 174–194 (FLTK…PYVI), 205–225 (FGPL…IAVH), 253–273 (APFW…LGLL), 286–306 (ISPE…FFSI), 311–331 (LLTY…ANAV), 346–366 (AWLN…LAFS), 378–398 (GALA…FIQL), and 408–428 (SALC…QSLI).

The protein belongs to the glycosyltransferase 83 family.

Its subcellular location is the cell inner membrane. The enzyme catalyses 4-amino-4-deoxy-alpha-L-arabinopyranosyl di-trans,octa-cis-undecaprenyl phosphate + lipid IVA = lipid IIA + di-trans,octa-cis-undecaprenyl phosphate.. It participates in lipopolysaccharide metabolism; 4-amino-4-deoxy-beta-L-arabinose-lipid A biosynthesis. In terms of biological role, catalyzes the transfer of the L-Ara4N moiety of the glycolipid undecaprenyl phosphate-alpha-L-Ara4N to lipid A. The modified arabinose is attached to lipid A and is required for resistance to polymyxin and cationic antimicrobial peptides. The chain is Undecaprenyl phosphate-alpha-4-amino-4-deoxy-L-arabinose arabinosyl transferase from Aeromonas hydrophila subsp. hydrophila (strain ATCC 7966 / DSM 30187 / BCRC 13018 / CCUG 14551 / JCM 1027 / KCTC 2358 / NCIMB 9240 / NCTC 8049).